A 240-amino-acid chain; its full sequence is Methylthioribulose-1-phosphate dehydratase (240 aa).

Position 99 (Cys99) interacts with substrate. 2 residues coordinate Zn(2+): His116 and His118. The active-site Proton donor/acceptor is Glu145. His201 is a Zn(2+) binding site.

It belongs to the aldolase class II family. MtnB subfamily. Zn(2+) serves as cofactor.

Its subcellular location is the cytoplasm. The enzyme catalyses 5-(methylsulfanyl)-D-ribulose 1-phosphate = 5-methylsulfanyl-2,3-dioxopentyl phosphate + H2O. It functions in the pathway amino-acid biosynthesis; L-methionine biosynthesis via salvage pathway; L-methionine from S-methyl-5-thio-alpha-D-ribose 1-phosphate: step 2/6. Catalyzes the dehydration of methylthioribulose-1-phosphate (MTRu-1-P) into 2,3-diketo-5-methylthiopentyl-1-phosphate (DK-MTP-1-P). This is Methylthioribulose-1-phosphate dehydratase from Ajellomyces capsulatus (strain H143) (Darling's disease fungus).